Here is a 515-residue protein sequence, read N- to C-terminus: MPSLENSTQNEARLLLVSNRLPITIKRSEDGKYDFSMSSGGLVSGLSGLSKSTTFQWYGWPGLEVPEEEIPVVKQRLKDEYGAIPVFIDDELADRHYNGFSNSILWPLFHYHPGEITFDESAWEAYKEANRLFAKAVAKEVQDGDLIWVHDYHLMLLPEMLREEIGDSKENVKIGFFLHTPFPSSEIYRILPVRNELLLGVLHCDLIGFHTYDYTRHFLSACSRLLGLATTPNGIEFQGKVIACGAFPIGIDPEKFQEGLKKEKVQKRIAQLEQKFQGVKLMVGVDRLDYIKGVPQKLHALEVFLSDHPEWVGKVVLVQVAVPSRQDVEEYQNLRAVVNELVGRINGKFGTVEFMPIHFLHKSVNFDELIALYAVSDACIVSSTRDGMNLVAYEYIASQQKRHGVLVLSEFAGAAQSLNGSIIINPWNTEELAGAYQEAVTMSDEQRALNFSKLDKYVNKYTSAFWGQSFVTELNRISAHSAGKFQSRKAKLPESADAEKPMNGSGESEESQTTQ.

Residues Y97 and D151 each coordinate D-glucose 6-phosphate. UDP-binding residues include R287 and K292. Positions 287 and 292 each coordinate UDP-alpha-D-glucose. R325 contributes to the D-glucose 6-phosphate binding site. UDP is bound by residues V364 and 390 to 394 (LVAYE). 386 to 394 (DGMNLVAYE) is a binding site for UDP-alpha-D-glucose. The disordered stretch occupies residues 483–515 (GKFQSRKAKLPESADAEKPMNGSGESEESQTTQ). Positions 491 to 500 (KLPESADAEK) are enriched in basic and acidic residues.

It belongs to the glycosyltransferase 20 family.

It carries out the reaction D-glucose 6-phosphate + UDP-alpha-D-glucose = alpha,alpha-trehalose 6-phosphate + UDP + H(+). Its pathway is carbohydrate biosynthesis. In terms of biological role, synthase catalytic subunit of the trehalose synthase complex that catalyzes the production of trehalose from glucose-6-phosphate and UDP-alpha-D-glucose in a two step process. The disaccharide trehalose serves as a storage carbohydrate that is mobilized during conidial germination. Regulates the level of trehalose as a protectant for cell integrity during thermal and oxidative stress. The protein is Alpha,alpha-trehalose-phosphate synthase [UDP-forming] 1 of Aspergillus fumigatus (strain ATCC MYA-4609 / CBS 101355 / FGSC A1100 / Af293) (Neosartorya fumigata).